Consider the following 1023-residue polypeptide: uncharacterized protein (1023 aa).

Residues 1-35 form a disordered region; it reads MAEKRPLGPLGPMMYGKLPRLEPDPGPGHSLPLSA. Lysine 17 carries the post-translational modification N6-acetyllysine. Residues serine 206 and serine 383 each carry the phosphoserine modification. Disordered stretches follow at residues 381–501, 518–551, 703–742, 907–980, and 1002–1023; these read GASP…PVID, PEPR…ASRS, PAPA…PEQH, EART…TLRA, and KASG…THHL. A Phosphothreonine modification is found at threonine 389. Polar residues predominate over residues 391-400; that stretch reads PSHSQNSVQP. Basic and acidic residues-rich tracts occupy residues 425-436, 443-454, and 477-490; these read RPAEKPTPEAQE, CRKEQLQPRPNE, and CAKE…KDAR. Serine 493 and serine 494 each carry phosphoserine. A compositionally biased stretch (pro residues) spans 706 to 722; sequence ASAPPPSPAPAPAPASG. Serine 912, serine 964, and serine 972 each carry phosphoserine. The segment covering 963 to 972 has biased composition (low complexity); the sequence is PSPSSGASTS.

This is an uncharacterized protein from Mus musculus (Mouse).